Reading from the N-terminus, the 379-residue chain is tRNA 2-selenouridine synthase (379 aa).

A Rhodanese domain is found at Phe-15–Glu-138. The active-site S-selanylcysteine intermediate is the Cys-98.

Belongs to the SelU family. As to quaternary structure, monomer.

It catalyses the reaction 5-methylaminomethyl-2-thiouridine(34) in tRNA + selenophosphate + (2E)-geranyl diphosphate + H2O + H(+) = 5-methylaminomethyl-2-selenouridine(34) in tRNA + (2E)-thiogeraniol + phosphate + diphosphate. The catalysed reaction is 5-methylaminomethyl-2-thiouridine(34) in tRNA + (2E)-geranyl diphosphate = 5-methylaminomethyl-S-(2E)-geranyl-thiouridine(34) in tRNA + diphosphate. The enzyme catalyses 5-methylaminomethyl-S-(2E)-geranyl-thiouridine(34) in tRNA + selenophosphate + H(+) = 5-methylaminomethyl-2-(Se-phospho)selenouridine(34) in tRNA + (2E)-thiogeraniol. It carries out the reaction 5-methylaminomethyl-2-(Se-phospho)selenouridine(34) in tRNA + H2O = 5-methylaminomethyl-2-selenouridine(34) in tRNA + phosphate. In terms of biological role, involved in the post-transcriptional modification of the uridine at the wobble position (U34) of tRNA(Lys), tRNA(Glu) and tRNA(Gln). Catalyzes the conversion of 2-thiouridine (S2U-RNA) to 2-selenouridine (Se2U-RNA). Acts in a two-step process involving geranylation of 2-thiouridine (S2U) to S-geranyl-2-thiouridine (geS2U) and subsequent selenation of the latter derivative to 2-selenouridine (Se2U) in the tRNA chain. This chain is tRNA 2-selenouridine synthase, found in Bdellovibrio bacteriovorus (strain ATCC 15356 / DSM 50701 / NCIMB 9529 / HD100).